Reading from the N-terminus, the 192-residue chain is Crossover junction endodeoxyribonuclease RuvC (192 aa).

Residues aspartate 9, glutamate 70, and aspartate 143 contribute to the active site. 3 residues coordinate Mg(2+): aspartate 9, glutamate 70, and aspartate 143. The segment at 161-192 (GASVATTGPGSSSLTPAQRAWAEAEAKARRAR) is disordered. Residues 163 to 176 (SVATTGPGSSSLTP) are compositionally biased toward polar residues. A compositionally biased stretch (basic and acidic residues) spans 182–192 (AEAEAKARRAR).

The protein belongs to the RuvC family. Homodimer which binds Holliday junction (HJ) DNA. The HJ becomes 2-fold symmetrical on binding to RuvC with unstacked arms; it has a different conformation from HJ DNA in complex with RuvA. In the full resolvosome a probable DNA-RuvA(4)-RuvB(12)-RuvC(2) complex forms which resolves the HJ. Requires Mg(2+) as cofactor.

The protein localises to the cytoplasm. The catalysed reaction is Endonucleolytic cleavage at a junction such as a reciprocal single-stranded crossover between two homologous DNA duplexes (Holliday junction).. The RuvA-RuvB-RuvC complex processes Holliday junction (HJ) DNA during genetic recombination and DNA repair. Endonuclease that resolves HJ intermediates. Cleaves cruciform DNA by making single-stranded nicks across the HJ at symmetrical positions within the homologous arms, yielding a 5'-phosphate and a 3'-hydroxyl group; requires a central core of homology in the junction. The consensus cleavage sequence is 5'-(A/T)TT(C/G)-3'. Cleavage occurs on the 3'-side of the TT dinucleotide at the point of strand exchange. HJ branch migration catalyzed by RuvA-RuvB allows RuvC to scan DNA until it finds its consensus sequence, where it cleaves and resolves the cruciform DNA. The sequence is that of Crossover junction endodeoxyribonuclease RuvC from Pseudarthrobacter chlorophenolicus (strain ATCC 700700 / DSM 12829 / CIP 107037 / JCM 12360 / KCTC 9906 / NCIMB 13794 / A6) (Arthrobacter chlorophenolicus).